The following is a 248-amino-acid chain: Homeobox-leucine zipper protein HOX15 (248 aa).

The interval 1–44 (MAQDDEDVGLALGLSLGSGGHRRQRESRDEAPSSAAASLLTLRL) is disordered. Positions 32-44 (PSSAAASLLTLRL) are enriched in low complexity. A DNA-binding region (homeobox) is located at residues 91–150 (NSRKKLRLSKEQSALLEDRFKEHSTLNPKQKVALAKQLNLRPRQVEVWFQNRRARTKLKQ). The leucine-zipper stretch occupies residues 149–193 (KQTEVDCELLKRCCETLTEENRRLHRELQQLRALTHSTAAGFFMA). The interval 223 to 248 (PTAAADRTNKPTAPHLFSPFAKSAAC) is disordered.

It belongs to the HD-ZIP homeobox family. Class II subfamily. Expressed in seedlings, stems, leaf blades and panicles.

It localises to the nucleus. In terms of biological role, probable transcription factor. In Oryza sativa subsp. indica (Rice), this protein is Homeobox-leucine zipper protein HOX15 (HOX15).